Consider the following 341-residue polypeptide: Biotin synthase (341 aa).

Residues 39–263 (EQVQLCTLLS…VAVARITMPL (225 aa)) enclose the Radical SAM core domain. [4Fe-4S] cluster is bound by residues Cys-54, Cys-58, and Cys-61. [2Fe-2S] cluster is bound by residues Cys-98, Cys-129, Cys-189, and Arg-267.

Belongs to the radical SAM superfamily. Biotin synthase family. Homodimer. [4Fe-4S] cluster serves as cofactor. It depends on [2Fe-2S] cluster as a cofactor.

The enzyme catalyses (4R,5S)-dethiobiotin + (sulfur carrier)-SH + 2 reduced [2Fe-2S]-[ferredoxin] + 2 S-adenosyl-L-methionine = (sulfur carrier)-H + biotin + 2 5'-deoxyadenosine + 2 L-methionine + 2 oxidized [2Fe-2S]-[ferredoxin]. It participates in cofactor biosynthesis; biotin biosynthesis; biotin from 7,8-diaminononanoate: step 2/2. Catalyzes the conversion of dethiobiotin (DTB) to biotin by the insertion of a sulfur atom into dethiobiotin via a radical-based mechanism. In Erythrobacter litoralis (strain HTCC2594), this protein is Biotin synthase.